The sequence spans 217 residues: Uracil-DNA glycosylase (217 aa).

Aspartate 62 serves as the catalytic Proton acceptor.

It belongs to the uracil-DNA glycosylase (UDG) superfamily. UNG family.

It is found in the cytoplasm. It catalyses the reaction Hydrolyzes single-stranded DNA or mismatched double-stranded DNA and polynucleotides, releasing free uracil.. Functionally, excises uracil residues from the DNA which can arise as a result of misincorporation of dUMP residues by DNA polymerase or due to deamination of cytosine. This is Uracil-DNA glycosylase from Streptococcus mutans serotype c (strain ATCC 700610 / UA159).